The chain runs to 280 residues: DegV domain-containing protein M6_Spy1440 (280 aa).

In terms of domain architecture, DegV spans 3–280; it reads WKIVTDSGCD…DGGLLMGYEI (278 aa). The hexadecanoate site is built by Ser63 and Ser91.

Functionally, may bind long-chain fatty acids, such as palmitate, and may play a role in lipid transport or fatty acid metabolism. The chain is DegV domain-containing protein M6_Spy1440 from Streptococcus pyogenes serotype M6 (strain ATCC BAA-946 / MGAS10394).